A 184-amino-acid chain; its full sequence is RNA polymerase sigma factor HrpL (184 aa).

The short motif at 49 to 62 (DILQCVFLEALRNE) is the Polymerase core binding element. Positions 151-170 (YQETANTLGVPIGTVRSRLS) form a DNA-binding region, H-T-H motif.

Belongs to the sigma-70 factor family. ECF subfamily.

Sigma factors are initiation factors that promote the attachment of RNA polymerase to specific initiation sites and are then released. This sigma factor is involved in the activation of hprD as well as other hrp loci which are involved in plant pathogenicity, hrmA and avr genes. This chain is RNA polymerase sigma factor HrpL (hrpL), found in Pseudomonas syringae pv. syringae.